Here is a 260-residue protein sequence, read N- to C-terminus: Neuraminyllactose-binding hemagglutinin (260 aa).

The first 27 residues, 1-27 (MKTNGHFKDFAWKKCLLGASVGALLVG), serve as a signal peptide directing secretion. The N-palmitoyl cysteine moiety is linked to residue cysteine 28. Cysteine 28 carries the S-diacylglycerol cysteine lipid modification. The N-acetyl-neuraminyl-alpha(2,3)-lactose binding motif stretch occupies residues 134 to 139 (KRTIQK).

It localises to the cell outer membrane. The polypeptide is Neuraminyllactose-binding hemagglutinin (hpaA) (Helicobacter pylori (Campylobacter pylori)).